Reading from the N-terminus, the 291-residue chain is 2-dehydro-3-deoxyphosphooctonate aldolase 2 (291 aa).

Alanine 2 carries the post-translational modification N-acetylalanine.

It belongs to the KdsA family. Expressed in roots, apical meristem, emerging leaves, hydathodes of young leaves, styles of mature flowers and funicules of mature siliques.

It localises to the cytoplasm. It catalyses the reaction D-arabinose 5-phosphate + phosphoenolpyruvate + H2O = 3-deoxy-alpha-D-manno-2-octulosonate-8-phosphate + phosphate. In terms of biological role, catalyzes the stereospecific condensation of D-arabinose 5-phosphate and phosphoenolpyruvate to form 3-deoxy-D-manno-octulosonate 8-phosphate (KDO-8-phosphate) and inorganic phosphate. Involved in the biosynthesis of 3-deoxy-D-manno-octulosonate (KDO) which is an indispensable component of rhamnogalacturonan II (RG-II), a structurally complex pectic polysaccharide of the primary cell wall. RG-II is essential for the cell wall integrity of rapidly growing tissues and pollen tube growth and elongation. The sequence is that of 2-dehydro-3-deoxyphosphooctonate aldolase 2 (KDSA2) from Arabidopsis thaliana (Mouse-ear cress).